The following is a 445-amino-acid chain: Proline--tRNA ligase (445 aa).

This sequence belongs to the class-II aminoacyl-tRNA synthetase family. ProS type 2 subfamily. As to quaternary structure, homodimer.

The protein resides in the cytoplasm. It carries out the reaction tRNA(Pro) + L-proline + ATP = L-prolyl-tRNA(Pro) + AMP + diphosphate. In terms of biological role, catalyzes the attachment of proline to tRNA(Pro) in a two-step reaction: proline is first activated by ATP to form Pro-AMP and then transferred to the acceptor end of tRNA(Pro). The protein is Proline--tRNA ligase of Cereibacter sphaeroides (strain ATCC 17029 / ATH 2.4.9) (Rhodobacter sphaeroides).